The chain runs to 522 residues: Alanine aminotransferase 2 (522 aa).

Lys-340 bears the N6-(pyridoxal phosphate)lysine mark. N6-acetyllysine is present on residues Lys-414, Lys-504, and Lys-511.

It belongs to the class-I pyridoxal-phosphate-dependent aminotransferase family. Alanine aminotransferase subfamily. In terms of assembly, homodimer. Pyridoxal 5'-phosphate is required as a cofactor. In terms of tissue distribution, specifically induced in fatty liver. Highly expressed in muscle, liver and white adipose tissue. Moderately expressed in brain and kidney and expressed at low levels in the heart.

The enzyme catalyses L-alanine + 2-oxoglutarate = pyruvate + L-glutamate. The protein operates within amino-acid degradation; L-alanine degradation via transaminase pathway; pyruvate from L-alanine: step 1/1. In terms of biological role, catalyzes the reversible transamination between alanine and 2-oxoglutarate to form pyruvate and glutamate. This chain is Alanine aminotransferase 2 (Gpt2), found in Mus musculus (Mouse).